Consider the following 166-residue polypeptide: Thiol peroxidase (166 aa).

Positions 18–164 constitute a Thioredoxin domain; it reads VKVGDKAPNF…YEKAIEAAKA (147 aa). Cysteine 60 (cysteine sulfenic acid (-SOH) intermediate) is an active-site residue. Residues cysteine 60 and cysteine 94 are joined by a disulfide bond.

Belongs to the peroxiredoxin family. Tpx subfamily. Homodimer.

It carries out the reaction a hydroperoxide + [thioredoxin]-dithiol = an alcohol + [thioredoxin]-disulfide + H2O. In terms of biological role, thiol-specific peroxidase that catalyzes the reduction of hydrogen peroxide and organic hydroperoxides to water and alcohols, respectively. Plays a role in cell protection against oxidative stress by detoxifying peroxides. The polypeptide is Thiol peroxidase (Halalkalibacterium halodurans (strain ATCC BAA-125 / DSM 18197 / FERM 7344 / JCM 9153 / C-125) (Bacillus halodurans)).